A 457-amino-acid polypeptide reads, in one-letter code: Siroheme synthase (457 aa).

The precorrin-2 dehydrogenase /sirohydrochlorin ferrochelatase stretch occupies residues 1–204 (MDHLPIFCQL…ADEKAVNATT (204 aa)). NAD(+) contacts are provided by residues 22–23 (DV) and 43–44 (LT). A Phosphoserine modification is found at Ser128. The uroporphyrinogen-III C-methyltransferase stretch occupies residues 216-457 (GEVVLVGAGP…RDKLNWFSNY (242 aa)). S-adenosyl-L-methionine is bound at residue Pro225. Catalysis depends on Asp248, which acts as the Proton acceptor. Lys270 serves as the catalytic Proton donor. S-adenosyl-L-methionine contacts are provided by residues 301–303 (GGD), Ile306, 331–332 (TA), Met382, and Gly411.

In the N-terminal section; belongs to the precorrin-2 dehydrogenase / sirohydrochlorin ferrochelatase family. It in the C-terminal section; belongs to the precorrin methyltransferase family.

The enzyme catalyses uroporphyrinogen III + 2 S-adenosyl-L-methionine = precorrin-2 + 2 S-adenosyl-L-homocysteine + H(+). The catalysed reaction is precorrin-2 + NAD(+) = sirohydrochlorin + NADH + 2 H(+). It carries out the reaction siroheme + 2 H(+) = sirohydrochlorin + Fe(2+). It participates in cofactor biosynthesis; adenosylcobalamin biosynthesis; precorrin-2 from uroporphyrinogen III: step 1/1. It functions in the pathway cofactor biosynthesis; adenosylcobalamin biosynthesis; sirohydrochlorin from precorrin-2: step 1/1. Its pathway is porphyrin-containing compound metabolism; siroheme biosynthesis; precorrin-2 from uroporphyrinogen III: step 1/1. The protein operates within porphyrin-containing compound metabolism; siroheme biosynthesis; siroheme from sirohydrochlorin: step 1/1. It participates in porphyrin-containing compound metabolism; siroheme biosynthesis; sirohydrochlorin from precorrin-2: step 1/1. Functionally, multifunctional enzyme that catalyzes the SAM-dependent methylations of uroporphyrinogen III at position C-2 and C-7 to form precorrin-2 via precorrin-1. Then it catalyzes the NAD-dependent ring dehydrogenation of precorrin-2 to yield sirohydrochlorin. Finally, it catalyzes the ferrochelation of sirohydrochlorin to yield siroheme. The protein is Siroheme synthase of Salmonella gallinarum (strain 287/91 / NCTC 13346).